Here is a 174-residue protein sequence, read N- to C-terminus: 2-oxo-4-hydroxy-4-carboxy-5-ureidoimidazoline decarboxylase (174 aa).

Catalysis depends on H67, which acts as the Proton donor. Residues P68, S84 to Q88, and F119 to A123 contribute to the substrate site. Residues T172 to L174 carry the Microbody targeting signal motif.

It belongs to the OHCU decarboxylase family. In terms of assembly, homodimer.

Its subcellular location is the peroxisome. It carries out the reaction 5-hydroxy-2-oxo-4-ureido-2,5-dihydro-1H-imidazole-5-carboxylate + H(+) = (S)-allantoin + CO2. It participates in purine metabolism; urate degradation; (S)-allantoin from urate: step 3/3. In terms of biological role, catalyzes the stereoselective decarboxylation of 2-oxo-4-hydroxy-4-carboxy-5-ureidoimidazoline (OHCU) to (S)-allantoin. The protein is 2-oxo-4-hydroxy-4-carboxy-5-ureidoimidazoline decarboxylase (urad) of Danio rerio (Zebrafish).